Consider the following 663-residue polypeptide: DNA ligase (663 aa).

Residues 31 to 35, 80 to 81, and E110 each bind NAD(+); these read DFEYD and SL. K112 acts as the N6-AMP-lysine intermediate in catalysis. NAD(+)-binding residues include R133, E168, K284, and K308. C402, C405, C420, and C425 together coordinate Zn(2+). A BRCT domain is found at 586–663; the sequence is IKDNRFEGKT…DEDKFRKMIE (78 aa).

Belongs to the NAD-dependent DNA ligase family. LigA subfamily. It depends on Mg(2+) as a cofactor. Mn(2+) serves as cofactor.

It carries out the reaction NAD(+) + (deoxyribonucleotide)n-3'-hydroxyl + 5'-phospho-(deoxyribonucleotide)m = (deoxyribonucleotide)n+m + AMP + beta-nicotinamide D-nucleotide.. In terms of biological role, DNA ligase that catalyzes the formation of phosphodiester linkages between 5'-phosphoryl and 3'-hydroxyl groups in double-stranded DNA using NAD as a coenzyme and as the energy source for the reaction. It is essential for DNA replication and repair of damaged DNA. In Acetivibrio thermocellus (strain ATCC 27405 / DSM 1237 / JCM 9322 / NBRC 103400 / NCIMB 10682 / NRRL B-4536 / VPI 7372) (Clostridium thermocellum), this protein is DNA ligase.